Here is a 428-residue protein sequence, read N- to C-terminus: Serine--tRNA ligase (428 aa).

236 to 238 is an L-serine binding site; it reads TAE. 267–269 provides a ligand contact to ATP; that stretch reads RSE. An L-serine-binding site is contributed by Glu-290. 354–357 contacts ATP; sequence EISS. An L-serine-binding site is contributed by Ser-388.

This sequence belongs to the class-II aminoacyl-tRNA synthetase family. Type-1 seryl-tRNA synthetase subfamily. Homodimer. The tRNA molecule binds across the dimer.

The protein resides in the cytoplasm. It carries out the reaction tRNA(Ser) + L-serine + ATP = L-seryl-tRNA(Ser) + AMP + diphosphate + H(+). The enzyme catalyses tRNA(Sec) + L-serine + ATP = L-seryl-tRNA(Sec) + AMP + diphosphate + H(+). It functions in the pathway aminoacyl-tRNA biosynthesis; selenocysteinyl-tRNA(Sec) biosynthesis; L-seryl-tRNA(Sec) from L-serine and tRNA(Sec): step 1/1. Its function is as follows. Catalyzes the attachment of serine to tRNA(Ser). Is also able to aminoacylate tRNA(Sec) with serine, to form the misacylated tRNA L-seryl-tRNA(Sec), which will be further converted into selenocysteinyl-tRNA(Sec). The chain is Serine--tRNA ligase from Psychrobacter cryohalolentis (strain ATCC BAA-1226 / DSM 17306 / VKM B-2378 / K5).